The following is a 397-amino-acid chain: Elongation factor Tu (397 aa).

The tr-type G domain occupies 10–207; sequence KPHVNVGTIG…TLDAYIPEPE (198 aa). Residues 19-26 form a G1 region; the sequence is GHVDHGKT. 19–26 is a GTP binding site; sequence GHVDHGKT. Residue threonine 26 coordinates Mg(2+). The G2 stretch occupies residues 60 to 64; sequence GITIA. The segment at 81-84 is G3; it reads DCPG. GTP is bound by residues 81-85 and 136-139; these read DCPGH and NKAD. The tract at residues 136-139 is G4; sequence NKAD. Positions 174 to 176 are G5; the sequence is SAL.

This sequence belongs to the TRAFAC class translation factor GTPase superfamily. Classic translation factor GTPase family. EF-Tu/EF-1A subfamily. Monomer.

It localises to the cytoplasm. The enzyme catalyses GTP + H2O = GDP + phosphate + H(+). GTP hydrolase that promotes the GTP-dependent binding of aminoacyl-tRNA to the A-site of ribosomes during protein biosynthesis. In Hahella chejuensis (strain KCTC 2396), this protein is Elongation factor Tu.